The sequence spans 552 residues: MIMFCVQCEQTIRTPAGNGCSYAQGMCGKTAETSDLQDLLIAALQGLSAWAVKAREYGIINHDVDSFAPRAFFSTLTNVNFDSPRIVGYAREAIALREALKAQCLAVDANARVDNPMADLQLVSDDLGELQRQAAEFTPNKDKAAIGENILGLRLLCLYGLKGAAAYMEHAHVLGQYDNDIYAQYHKIMAWLGTWPADMNALLECSMEIGQMNFKVMSILDAGETGKYGHPTPTQVNVKATAGKCILISGHDLKDLYNLLEQTEGTGVNVYTHGEMLPAHGYPELRKFKHLVGNYGSGWQNQQVEFARFPGPIVMTSNCIIDPTVGAYDDRIWTRSIVGWPGVRHLDGEDFSAVIAQAQQMAGFPYSEIPHLITVGFGRQTLLGAADTLIDLVSREKLRHIFLLGGCDGARGERHYFTDFATSVPDDCLILTLACGKYRFNKLEFGDIEGLPRLVDAGQCNDAYSAIILAVTLAEKLGCGVNDLPLSLVLSWFEQKAIVILLTLLSLGVKNIVTGPTAPGFLTPDLLAVLNEKFGLRSITTVEEDMKQLLSA.

Residues C5, C8, C20, and C27 each coordinate [2Fe-2S] cluster. Positions 251, 275, 319, 407, 435, 460, 494, and 496 each coordinate hybrid [4Fe-2O-2S] cluster. C407 carries the cysteine persulfide modification.

The protein belongs to the HCP family. The cofactor is [2Fe-2S] cluster. Hybrid [4Fe-2O-2S] cluster is required as a cofactor.

The protein resides in the cytoplasm. The catalysed reaction is A + NH4(+) + H2O = hydroxylamine + AH2 + H(+). Functionally, catalyzes the reduction of hydroxylamine to form NH(3) and H(2)O. The sequence is that of Hydroxylamine reductase from Escherichia coli (strain UTI89 / UPEC).